A 205-amino-acid polypeptide reads, in one-letter code: Adenylate kinase (205 aa).

Residue G10–T15 coordinates ATP. The NMP stretch occupies residues S30 to V59. Residues T31, R36, E57–V59, G85–R88, and Q92 each bind AMP. The interval T126–D139 is LID. ATP is bound at residue R127. R136 and R147 together coordinate AMP. K175 lines the ATP pocket.

Belongs to the adenylate kinase family. In terms of assembly, monomer.

It is found in the cytoplasm. It catalyses the reaction AMP + ATP = 2 ADP. It functions in the pathway purine metabolism; AMP biosynthesis via salvage pathway; AMP from ADP: step 1/1. Its function is as follows. Catalyzes the reversible transfer of the terminal phosphate group between ATP and AMP. Plays an important role in cellular energy homeostasis and in adenine nucleotide metabolism. This Parvibaculum lavamentivorans (strain DS-1 / DSM 13023 / NCIMB 13966) protein is Adenylate kinase.